Consider the following 84-residue polypeptide: Beta-mammal Tt1g (84 aa).

An N-terminal signal peptide occupies residues 1 to 20; that stretch reads MKGMILFISCILLIGIVVEC. The region spanning 21–82 is the LCN-type CS-alpha/beta domain; the sequence is KEGYLMDHEG…VWERATNRCG (62 aa). 4 disulfide bridges follow: cysteine 31-cysteine 81, cysteine 35-cysteine 57, cysteine 43-cysteine 62, and cysteine 47-cysteine 64. Cysteine 81 is subject to Cysteine amide.

Belongs to the long (4 C-C) scorpion toxin superfamily. Sodium channel inhibitor family. Beta subfamily. As to expression, expressed by the venom gland.

Its subcellular location is the secreted. In terms of biological role, beta toxins modify sodium channel function in two ways: an excitatory effect (shifting the activation process to more negative potential) and/or a depressant effect (reducing the peak current). At concentration of 500 nM this toxin produces channel opening at more negative potentials in hNav1.2/SCN2A and hNav1.3/SCN3A, which shows the biggest effect. On the other hand the peak current is decreased in hNav1.4/SCN4A and hNav1.5/SCN5A channels, without apparent modification of the activation gate. This toxin is active against mammals. In Tityus trivittatus (Argentinean scorpion), this protein is Beta-mammal Tt1g.